A 420-amino-acid polypeptide reads, in one-letter code: D-tagatose-1,6-bisphosphate aldolase subunit GatZ (420 aa).

Belongs to the GatZ/KbaZ family. GatZ subfamily. As to quaternary structure, forms a complex with GatY.

Its pathway is carbohydrate metabolism; D-tagatose 6-phosphate degradation; D-glyceraldehyde 3-phosphate and glycerone phosphate from D-tagatose 6-phosphate: step 2/2. Component of the tagatose-1,6-bisphosphate aldolase GatYZ that is required for full activity and stability of the Y subunit. Could have a chaperone-like function for the proper and stable folding of GatY. When expressed alone, GatZ does not show any aldolase activity. Is involved in the catabolism of galactitol. The chain is D-tagatose-1,6-bisphosphate aldolase subunit GatZ from Escherichia coli O6:K15:H31 (strain 536 / UPEC).